We begin with the raw amino-acid sequence, 317 residues long: Ornithine carbamoyltransferase (317 aa).

Carbamoyl phosphate contacts are provided by residues 57–60 (STRT), glutamine 84, arginine 108, and 135–138 (HPCQ). Residues asparagine 166, aspartate 230, and 234–235 (SM) each bind L-ornithine. Residues 270-271 (CL) and arginine 298 contribute to the carbamoyl phosphate site.

Belongs to the aspartate/ornithine carbamoyltransferase superfamily. OTCase family. Homododecamer.

Its subcellular location is the cytoplasm. The catalysed reaction is carbamoyl phosphate + L-ornithine = L-citrulline + phosphate + H(+). It participates in amino-acid biosynthesis; L-arginine biosynthesis; L-arginine from L-ornithine and carbamoyl phosphate: step 1/3. In terms of biological role, reversibly catalyzes the transfer of the carbamoyl group from carbamoyl phosphate (CP) to the N(epsilon) atom of ornithine (ORN) to produce L-citrulline. In Pyrococcus horikoshii (strain ATCC 700860 / DSM 12428 / JCM 9974 / NBRC 100139 / OT-3), this protein is Ornithine carbamoyltransferase.